A 632-amino-acid polypeptide reads, in one-letter code: Phosphomethylpyrimidine synthase (632 aa).

A compositionally biased stretch (polar residues) spans 1-13; that stretch reads MNIRSNPDTTLPA. Positions 1–26 are disordered; sequence MNIRSNPDTTLPAVTTGPLPSSRKIF. Substrate is bound by residues Asn-221, Met-250, Tyr-279, His-315, 335–337, 376–379, and Glu-415; these read SRG and DGLR. His-419 provides a ligand contact to Zn(2+). Tyr-442 provides a ligand contact to substrate. His-483 serves as a coordination point for Zn(2+). Residues Cys-563, Cys-566, and Cys-571 each coordinate [4Fe-4S] cluster.

Belongs to the ThiC family. Homodimer. [4Fe-4S] cluster is required as a cofactor.

It catalyses the reaction 5-amino-1-(5-phospho-beta-D-ribosyl)imidazole + S-adenosyl-L-methionine = 4-amino-2-methyl-5-(phosphooxymethyl)pyrimidine + CO + 5'-deoxyadenosine + formate + L-methionine + 3 H(+). It functions in the pathway cofactor biosynthesis; thiamine diphosphate biosynthesis. In terms of biological role, catalyzes the synthesis of the hydroxymethylpyrimidine phosphate (HMP-P) moiety of thiamine from aminoimidazole ribotide (AIR) in a radical S-adenosyl-L-methionine (SAM)-dependent reaction. The protein is Phosphomethylpyrimidine synthase of Afipia carboxidovorans (strain ATCC 49405 / DSM 1227 / KCTC 32145 / OM5) (Oligotropha carboxidovorans).